We begin with the raw amino-acid sequence, 263 residues long: Hydroxyethylthiazole kinase (263 aa).

M41 is a substrate binding site. Residues K117 and S163 each contribute to the ATP site. Position 190 (G190) interacts with substrate.

It belongs to the Thz kinase family. It depends on Mg(2+) as a cofactor.

It catalyses the reaction 5-(2-hydroxyethyl)-4-methylthiazole + ATP = 4-methyl-5-(2-phosphooxyethyl)-thiazole + ADP + H(+). Its pathway is cofactor biosynthesis; thiamine diphosphate biosynthesis; 4-methyl-5-(2-phosphoethyl)-thiazole from 5-(2-hydroxyethyl)-4-methylthiazole: step 1/1. Catalyzes the phosphorylation of the hydroxyl group of 4-methyl-5-beta-hydroxyethylthiazole (THZ). The polypeptide is Hydroxyethylthiazole kinase (Thermoanaerobacter sp. (strain X514)).